Here is a 237-residue protein sequence, read N- to C-terminus: Ribosomal RNA small subunit methyltransferase G (237 aa).

Residues Gly78, Phe83, 129–130, and Arg148 each bind S-adenosyl-L-methionine; that span reads AE. Residues 218 to 237 are disordered; sequence KKETPNKYPRKAGMPNKRPL.

It belongs to the methyltransferase superfamily. RNA methyltransferase RsmG family.

The protein resides in the cytoplasm. In terms of biological role, specifically methylates the N7 position of a guanine in 16S rRNA. The chain is Ribosomal RNA small subunit methyltransferase G from Streptococcus pneumoniae (strain ATCC BAA-255 / R6).